The chain runs to 115 residues: Large ribosomal subunit protein bL19 (115 aa).

It belongs to the bacterial ribosomal protein bL19 family.

This protein is located at the 30S-50S ribosomal subunit interface and may play a role in the structure and function of the aminoacyl-tRNA binding site. This is Large ribosomal subunit protein bL19 (rplS) from Buchnera aphidicola subsp. Acyrthosiphon pisum (strain APS) (Acyrthosiphon pisum symbiotic bacterium).